Consider the following 747-residue polypeptide: Internal virion protein gp15 (747 aa).

It belongs to the T7virus internal virion protein gp15 family. Homooctamer. Interacts with gp16; after ejection the gp15-gp16 complex composed of a gp15 octamer and a gp16 tetramer probably binds both the viral DNA and the host inner membrane. Interacts with gp14.

It localises to the virion. The protein resides in the host periplasm. Its function is as follows. Component of the cylindrical core that assembles on the inner surface of the capsid during capsid formation and plays a role in viral DNA ejection into the host cell. The inner core is composed of stacked rings of gp14, gp15 and gp16 proteins. Following binding to the host cell surface, the internal core is disassembled and gp15 is ejected along with gp14 and gp16 into the infected cell. Gp15 probably remains associated with gp16. The gp15-gp16 complex binds to both the viral DNA and the host inner membrane, probably escorting the leading end of the genome through the periplasm and controlling the extend of DNA translocated into the host cell. The sequence is that of Internal virion protein gp15 from Escherichia phage T7 (Bacteriophage T7).